The following is a 342-amino-acid chain: uncharacterized protein (342 aa).

One can recognise a MurNAc-LAA domain in the interval 3–173 (IAIRGGHNFL…LIGYLIAKGI (171 aa)).

To C.perfringens CPE1502.

This is an uncharacterized protein from Clostridium perfringens.